The chain runs to 285 residues: MIIESRIEKGKPVVGMETTVFVHGLPRKEAIELFRRAKEISREKGFQLAVIGILKGKIVAGMSEEELEAMMREGADKVGTREIPIVVAEGKNAATTVSATIFLSRRIGIEVVVTGGTGGVHPGRVDVSQDLTEMSSSRAILVSSGIKSILDVEATFEMLETLEIPLIGFRTDEFPLFFSRKSGRRVPRVENVEEVLKIYETMKEIELEKTLMVLNPVPEEYEVPHDEIERLLEKIELEVEGKEVTPFLLKKLVEMTNGRTLKANLALLEENVKLAGEIAVKLKRS.

Glu17 (proton donor) is an active-site residue. Substrate contacts are provided by Lys77 and Val97. Asp126 contributes to the Mn(2+) binding site. Residue 128 to 130 (SQD) coordinates substrate. Lys147 serves as the catalytic Nucleophile.

Belongs to the pseudouridine-5'-phosphate glycosidase family. In terms of assembly, homotrimer. The cofactor is Mn(2+).

It catalyses the reaction D-ribose 5-phosphate + uracil = psi-UMP + H2O. Functionally, catalyzes the reversible cleavage of pseudouridine 5'-phosphate (PsiMP) to ribose 5-phosphate and uracil. Functions biologically in the cleavage direction, as part of a pseudouridine degradation pathway. The polypeptide is Pseudouridine-5'-phosphate glycosidase (Thermotoga sp. (strain RQ2)).